Reading from the N-terminus, the 416-residue chain is RNA-editing ligase 2, mitochondrial (416 aa).

The transit peptide at 1–17 directs the protein to the mitochondrion; the sequence is MLRRLGVRHFRRTPLLF. ATP is bound by residues 29–31, 56–62, Arg79, Glu126, Phe173, and 269–271; these read TEI, EKVHGAN, and KFK. The N6-AMP-lysine intermediate role is filled by Lys57.

Belongs to the RNA ligase 2 family. Component of the RNA editing complex, a 1600 kDa complex composed of at least 20 proteins.

It localises to the mitochondrion. It carries out the reaction ATP + (ribonucleotide)n-3'-hydroxyl + 5'-phospho-(ribonucleotide)m = (ribonucleotide)n+m + AMP + diphosphate.. In terms of biological role, RNA editing in kinetoplastid mitochondria inserts and deletes uridylates at multiple sites in pre-mRNAs as directed by guide RNAs. The chain is RNA-editing ligase 2, mitochondrial (REL2) from Trypanosoma brucei brucei (strain 927/4 GUTat10.1).